Reading from the N-terminus, the 288-residue chain is Tryptophan 2,3-dioxygenase (288 aa).

Substrate is bound by residues 57 to 61 (FIIQH), tyrosine 119, and arginine 123. Histidine 246 is a heme binding site. Threonine 260 is a binding site for substrate.

Belongs to the tryptophan 2,3-dioxygenase family. As to quaternary structure, homotetramer. Requires heme as cofactor.

It carries out the reaction L-tryptophan + O2 = N-formyl-L-kynurenine. Its pathway is amino-acid degradation; L-tryptophan degradation via kynurenine pathway; L-kynurenine from L-tryptophan: step 1/2. Functionally, heme-dependent dioxygenase that catalyzes the oxidative cleavage of the L-tryptophan (L-Trp) pyrrole ring and converts L-tryptophan to N-formyl-L-kynurenine. Catalyzes the oxidative cleavage of the indole moiety. This is Tryptophan 2,3-dioxygenase from Pseudomonas aeruginosa (strain ATCC 15692 / DSM 22644 / CIP 104116 / JCM 14847 / LMG 12228 / 1C / PRS 101 / PAO1).